The following is a 379-amino-acid chain: Putative acetyl-CoA C-acetyltransferase VraB (379 aa).

The active-site Acyl-thioester intermediate is the Cys-86. His-338 serves as the catalytic Proton acceptor.

This sequence belongs to the thiolase-like superfamily. Thiolase family.

This is Putative acetyl-CoA C-acetyltransferase VraB (vraB) from Staphylococcus aureus (strain Mu3 / ATCC 700698).